The sequence spans 368 residues: 4-hydroxy-3-methylbut-2-en-1-yl diphosphate synthase (flavodoxin) (368 aa).

[4Fe-4S] cluster is bound by residues cysteine 271, cysteine 274, cysteine 306, and glutamate 313.

It belongs to the IspG family. It depends on [4Fe-4S] cluster as a cofactor.

It carries out the reaction (2E)-4-hydroxy-3-methylbut-2-enyl diphosphate + oxidized [flavodoxin] + H2O + 2 H(+) = 2-C-methyl-D-erythritol 2,4-cyclic diphosphate + reduced [flavodoxin]. It functions in the pathway isoprenoid biosynthesis; isopentenyl diphosphate biosynthesis via DXP pathway; isopentenyl diphosphate from 1-deoxy-D-xylulose 5-phosphate: step 5/6. Converts 2C-methyl-D-erythritol 2,4-cyclodiphosphate (ME-2,4cPP) into 1-hydroxy-2-methyl-2-(E)-butenyl 4-diphosphate. The chain is 4-hydroxy-3-methylbut-2-en-1-yl diphosphate synthase (flavodoxin) from Haemophilus influenzae (strain ATCC 51907 / DSM 11121 / KW20 / Rd).